The chain runs to 382 residues: Carbamoyl phosphate synthase small chain (382 aa).

Residues 1 to 189 form a CPSase region; sequence MIKSALLVLE…GLPEAKSEDD (189 aa). Residues serine 47, glycine 241, and glycine 243 each coordinate L-glutamine. Residues 193-380 enclose the Glutamine amidotransferase type-1 domain; it reads HVVAYDFGAK…IELIEQYRQS (188 aa). Catalysis depends on cysteine 269, which acts as the Nucleophile. Leucine 270, glutamine 273, asparagine 311, glycine 313, and phenylalanine 314 together coordinate L-glutamine. Residues histidine 353 and glutamate 355 contribute to the active site.

Belongs to the CarA family. As to quaternary structure, composed of two chains; the small (or glutamine) chain promotes the hydrolysis of glutamine to ammonia, which is used by the large (or ammonia) chain to synthesize carbamoyl phosphate. Tetramer of heterodimers (alpha,beta)4.

It carries out the reaction hydrogencarbonate + L-glutamine + 2 ATP + H2O = carbamoyl phosphate + L-glutamate + 2 ADP + phosphate + 2 H(+). It catalyses the reaction L-glutamine + H2O = L-glutamate + NH4(+). The protein operates within amino-acid biosynthesis; L-arginine biosynthesis; carbamoyl phosphate from bicarbonate: step 1/1. It functions in the pathway pyrimidine metabolism; UMP biosynthesis via de novo pathway; (S)-dihydroorotate from bicarbonate: step 1/3. Functionally, small subunit of the glutamine-dependent carbamoyl phosphate synthetase (CPSase). CPSase catalyzes the formation of carbamoyl phosphate from the ammonia moiety of glutamine, carbonate, and phosphate donated by ATP, constituting the first step of 2 biosynthetic pathways, one leading to arginine and/or urea and the other to pyrimidine nucleotides. The small subunit (glutamine amidotransferase) binds and cleaves glutamine to supply the large subunit with the substrate ammonia. The sequence is that of Carbamoyl phosphate synthase small chain from Salmonella typhimurium (strain LT2 / SGSC1412 / ATCC 700720).